Consider the following 202-residue polypeptide: dTTP/UTP pyrophosphatase (202 aa).

The active-site Proton acceptor is Asp-76.

Belongs to the Maf family. YhdE subfamily. The cofactor is a divalent metal cation.

It is found in the cytoplasm. The enzyme catalyses dTTP + H2O = dTMP + diphosphate + H(+). It carries out the reaction UTP + H2O = UMP + diphosphate + H(+). Nucleoside triphosphate pyrophosphatase that hydrolyzes dTTP and UTP. May have a dual role in cell division arrest and in preventing the incorporation of modified nucleotides into cellular nucleic acids. The protein is dTTP/UTP pyrophosphatase of Neisseria meningitidis serogroup B (strain ATCC BAA-335 / MC58).